The chain runs to 492 residues: Virion host shutoff protein (492 aa).

3 disordered regions span residues 110–130 (EEAS…SRPS), 288–307 (SQAR…LESM), and 334–371 (EDDY…ELVQ).

The protein belongs to the herpesviridae VHS protein family. In terms of assembly, interacts with human EIF4H, EIF4A1 and EIF4A2; interaction with eIF4AI and EIF4A2 presumably allows Vhs protein to associate with the eIF4F cap-binding complex.

The protein resides in the virion. Minor structural protein that acts as an endoribonuclease during lytic infection. Degrades host mRNAs in the cytoplasm by cutting them at preferred sites, including some in regions of translation initiation. Together with inhibition of host splicing by ICP27, contributes to an overall decrease in host protein synthesis. Also, after the onset of viral transcription, accelerates the turnover of viral mRNA, thereby facilitating the sequential expression of different classes of viral genes. Binds translation initiation factors eIF4H, eIF4AI, and eIF4AII, thereby may interact directly with the translation initiation complex and thus digest specifically mRNAs. Also impedes antigen presentation by major histocompatibility complex class I and class II molecules, inhibits secretion of cytokines that would otherwise recruit lymphocytes and neutrophils cells to the site of infection and blocks the activation of dendritic cells. Impedes the alpha/beta interferon-mediated response to infection. Inhibits the integrated stress response (ISR) in the infected cell, this function requires the endonuclease activity. Stress granule formation is thus inhibited, which allows protein synthesis and viral replication. This chain is Virion host shutoff protein (UL41), found in Homo sapiens (Human).